The primary structure comprises 180 residues: Orotate phosphoribosyltransferase (180 aa).

5-phospho-alpha-D-ribose 1-diphosphate contacts are provided by residues Arg95, Lys96, Lys99, and 121–129; that span reads EDVTTTGGS. Residues Thr125 and Arg153 each contribute to the orotate site.

The protein belongs to the purine/pyrimidine phosphoribosyltransferase family. PyrE subfamily. Homodimer. Mg(2+) serves as cofactor.

The catalysed reaction is orotidine 5'-phosphate + diphosphate = orotate + 5-phospho-alpha-D-ribose 1-diphosphate. The protein operates within pyrimidine metabolism; UMP biosynthesis via de novo pathway; UMP from orotate: step 1/2. Functionally, catalyzes the transfer of a ribosyl phosphate group from 5-phosphoribose 1-diphosphate to orotate, leading to the formation of orotidine monophosphate (OMP). This Methanothermobacter thermautotrophicus (strain ATCC 29096 / DSM 1053 / JCM 10044 / NBRC 100330 / Delta H) (Methanobacterium thermoautotrophicum) protein is Orotate phosphoribosyltransferase.